Here is a 631-residue protein sequence, read N- to C-terminus: Putative meiotic phospholipase SPO1 (631 aa).

An N-terminal signal peptide occupies residues 1–17; the sequence is MQKLLFVFSVLLTVVLA. The interval 24-67 is required for lipid-binding and function in meiosis; it reads QCPSSPLIREAKHELCPEETLYLKKKKIKTKNKLIQFLKSLTEA. The PLA2c domain maps to 24-631; it reads QCPSSPLIRE…LQCFKDYCYS (608 aa). N-linked (GlcNAc...) asparagine glycosylation is found at asparagine 233, asparagine 293, and asparagine 303. A helical membrane pass occupies residues 376-396; the sequence is FITATSSSIFNNVLIFIWNLA. N-linked (GlcNAc...) asparagine glycans are attached at residues asparagine 500, asparagine 536, asparagine 560, asparagine 563, and asparagine 572.

This sequence belongs to the lysophospholipase family. In terms of assembly, interacts with SPO23. Glycosylated.

It is found in the endoplasmic reticulum membrane. The protein localises to the nucleus membrane. Its function is as follows. Regulates spindle pole duplication in meiosis I, but not in mitosis. Required for meiosis I, meiosis II chromosome segregation and spore formation. Binds phosphatidylinositol (4)P mono- and polyphosphates. This chain is Putative meiotic phospholipase SPO1 (SPO1), found in Saccharomyces cerevisiae (strain ATCC 204508 / S288c) (Baker's yeast).